Reading from the N-terminus, the 463-residue chain is Serine carboxypeptidase-like 32 (463 aa).

The signal sequence occupies residues 1-22; it reads MMNISNVSIALYLCTLFAFVSS. Intrachain disulfides connect Cys-86–Cys-345, Cys-249–Cys-262, and Cys-286–Cys-313. N-linked (GlcNAc...) asparagine glycosylation is present at Asn-137. The active site involves Ser-179. Asn-201 and Asn-250 each carry an N-linked (GlcNAc...) asparagine glycan. 2 N-linked (GlcNAc...) asparagine glycosylation sites follow: Asn-341 and Asn-354. Active-site residues include Asp-384 and His-436.

The protein belongs to the peptidase S10 family. Expressed in flowers.

Its subcellular location is the secreted. Probable carboxypeptidase. The sequence is that of Serine carboxypeptidase-like 32 (SCPL32) from Arabidopsis thaliana (Mouse-ear cress).